The chain runs to 101 residues: NADH-quinone oxidoreductase subunit K (101 aa).

The next 3 helical transmembrane spans lie at 4-24 (LSHY…GIFL), 30-50 (IILL…FVAF), and 61-81 (IFVF…LAIL).

The protein belongs to the complex I subunit 4L family. NDH-1 is composed of 14 different subunits. Subunits NuoA, H, J, K, L, M, N constitute the membrane sector of the complex.

The protein localises to the cell inner membrane. The catalysed reaction is a quinone + NADH + 5 H(+)(in) = a quinol + NAD(+) + 4 H(+)(out). Its function is as follows. NDH-1 shuttles electrons from NADH, via FMN and iron-sulfur (Fe-S) centers, to quinones in the respiratory chain. The immediate electron acceptor for the enzyme in this species is believed to be ubiquinone. Couples the redox reaction to proton translocation (for every two electrons transferred, four hydrogen ions are translocated across the cytoplasmic membrane), and thus conserves the redox energy in a proton gradient. This chain is NADH-quinone oxidoreductase subunit K, found in Nitrosomonas europaea (strain ATCC 19718 / CIP 103999 / KCTC 2705 / NBRC 14298).